Here is a 310-residue protein sequence, read N- to C-terminus: Proline iminopeptidase (310 aa).

The region spanning proline 33–phenylalanine 290 is the AB hydrolase-1 domain. Serine 107 functions as the Nucleophile in the catalytic mechanism. Aspartate 260 is an active-site residue. The active-site Proton donor is histidine 287.

It belongs to the peptidase S33 family.

It localises to the cytoplasm. It carries out the reaction Release of N-terminal proline from a peptide.. Its function is as follows. Hydrolyzes peptides having the structure Pro-Y-Z to yield free proline. Also hydrolyzes the dipeptide Pro-Gly. The sequence is that of Proline iminopeptidase (pip) from Neisseria gonorrhoeae.